A 408-amino-acid polypeptide reads, in one-letter code: UPF0761 membrane protein azo3165 (408 aa).

The next 7 helical transmembrane spans lie at 29-49 (LAFT…GVFG), 92-112 (LTLI…ATIE), 131-151 (ITVS…SVVA), 172-192 (IAAA…LYYA), 197-217 (PVRL…FLLM), 220-240 (GLGL…TFAA), and 241-261 (LPIF…GALI).

It belongs to the UPF0761 family.

The protein localises to the cell inner membrane. This is UPF0761 membrane protein azo3165 from Azoarcus sp. (strain BH72).